The chain runs to 1382 residues: Hepatocyte growth factor receptor (1382 aa).

Residues 1 to 24 (MRAPAVLAPGILVLLFTLVQRSCG) form the signal peptide. The Extracellular portion of the chain corresponds to 25 to 933 (ECKEALVKSE…VIVQPDQNFT (909 aa)). One can recognise a Sema domain in the interval 27 to 516 (KEALVKSEMN…TGKKITKIPL (490 aa)). An N-linked (GlcNAc...) asparagine glycan is attached at Asn45. Disulfide bonds link Cys95–Cys101, Cys98–Cys160, Cys133–Cys141, and Cys173–Cys176. Asn106 is a glycosylation site (N-linked (GlcNAc...) asparagine). N-linked (GlcNAc...) asparagine glycans are attached at residues Asn203 and Asn359. 2 disulfides stabilise this stretch: Cys299-Cys364 and Cys386-Cys398. Asn400 and Asn406 each carry an N-linked (GlcNAc...) asparagine glycan. Intrachain disulfides connect Cys521-Cys539, Cys527-Cys562, Cys530-Cys546, and Cys542-Cys552. IPT/TIG domains are found at residues 564-656 (PTIY…FSYV), 658-740 (PIIT…FSYQ), and 743-837 (PIVY…LIYV). An O-linked (Man) threonine glycan is attached at Thr583. Residues Asn608 and Asn636 are each glycosylated (N-linked (GlcNAc...) asparagine). 2 O-linked (Man) threonine glycosylation sites follow: Thr677 and Thr762. N-linked (GlcNAc...) asparagine glycosylation is found at Asn786, Asn880, and Asn931. The helical transmembrane segment at 934–956 (GLIVGVISISLIVLLLLGLFLWL) threads the bilayer. Topologically, residues 957 to 1382 (KRRKQIKDLG…QDIIDGEGDT (426 aa)) are cytoplasmic. Ser967 carries the post-translational modification Phosphoserine. At Thr978 the chain carries Phosphothreonine. Phosphoserine is present on residues Ser991, Ser998, and Ser1001. Tyr1004 bears the Phosphotyrosine mark. A Protein kinase domain is found at 1079–1346 (VHFNEVIGRG…RISAIFSTFI (268 aa)). ATP contacts are provided by residues 1085–1093 (IGRGHFGCV) and Lys1111. Asp1205 acts as the Proton acceptor in catalysis. The tract at residues 1213–1382 (LDEKFTVKVA…QDIIDGEGDT (170 aa)) is interaction with RANBP9. Tyr1231 carries the post-translational modification Phosphotyrosine. Tyr1235 and Tyr1236 each carry phosphotyrosine; by autocatalysis. Thr1290 carries the post-translational modification Phosphothreonine. The interaction with MUC20 stretch occupies residues 1321 to 1360 (WHPKAELRPSFSELVSRISAIFSTFIGEHYVHVNATYVNV). Residues Tyr1350 and Tyr1357 each carry the phosphotyrosine; by autocatalysis modification. At Tyr1366 the chain carries Phosphotyrosine.

Belongs to the protein kinase superfamily. Tyr protein kinase family. As to quaternary structure, heterodimer made of an alpha chain (50 kDa) and a beta chain (145 kDa) which are disulfide linked. Binds PLXNB1. Interacts when phosphorylated with downstream effectors including STAT3, PIK3R1, SRC, PCLG1, GRB2 and GAB1. Interacts with SPSB1, SPSB2 and SPSB4. Interacts with INPP5D/SHIP1. When phosphorylated at Tyr-1357, interacts with INPPL1/SHIP2. Interacts with RANBP9 and RANBP10, as well as SPSB1, SPSB2, SPSB3 and SPSB4. SPSB1 binding occurs in the presence and in the absence of HGF, however HGF treatment has a positive effect on this interaction. Interacts with MUC20; prevents interaction with GRB2 and suppresses hepatocyte growth factor-induced cell proliferation. Interacts with GRB10. Interacts with PTPN1 and PTPN2. Interacts with HSP90AA1 and HSP90AB1; the interaction suppresses MET kinase activity. Interacts with tensin TNS3. Interacts (when phosphorylated) with tensin TNS4 (via SH2 domain); the interaction increases MET protein stability by inhibiting MET endocytosis and subsequent lysosomal degradation. Post-translationally, autophosphorylated in response to ligand binding on Tyr-1235 and Tyr-1236 in the kinase domain leading to further phosphorylation of Tyr-1350 and Tyr-1357 in the C-terminal multifunctional docking site. Dephosphorylated by PTPRJ at Tyr-1350 and Tyr-1366. Dephosphorylated by PTPN1 and PTPN2. Ubiquitinated. Ubiquitination by CBL regulates the receptor stability and activity through proteasomal degradation. In terms of processing, O-mannosylation of IPT/TIG domains by TMEM260 is required for protein maturation. O-mannosylated residues are composed of single mannose glycans that are not elongated or modified.

The protein resides in the membrane. The catalysed reaction is L-tyrosyl-[protein] + ATP = O-phospho-L-tyrosyl-[protein] + ADP + H(+). With respect to regulation, in its inactive state, the C-terminal tail interacts with the catalytic domain and inhibits the kinase activity. Upon ligand binding, the C-terminal tail is displaced and becomes phosphorylated, thus increasing the kinase activity. Its function is as follows. Receptor tyrosine kinase that transduces signals from the extracellular matrix into the cytoplasm by binding to hepatocyte growth factor/HGF ligand. Regulates many physiological processes including proliferation, scattering, morphogenesis and survival. Ligand binding at the cell surface induces autophosphorylation of MET on its intracellular domain that provides docking sites for downstream signaling molecules. Following activation by ligand, interacts with the PI3-kinase subunit PIK3R1, PLCG1, SRC, GRB2, STAT3 or the adapter GAB1. Recruitment of these downstream effectors by MET leads to the activation of several signaling cascades including the RAS-ERK, PI3 kinase-AKT, or PLCgamma-PKC. The RAS-ERK activation is associated with the morphogenetic effects while PI3K/AKT coordinates prosurvival effects. During embryonic development, MET signaling plays a role in gastrulation, development and migration of muscles and neuronal precursors, angiogenesis and kidney formation. In adults, participates in wound healing as well as organ regeneration and tissue remodeling. Also promotes differentiation and proliferation of hematopoietic cells. The protein is Hepatocyte growth factor receptor (MET) of Mustela putorius furo (European domestic ferret).